The sequence spans 142 residues: MLSPRRTKFRKQQRGRMGGLAHRGSTLNFGDFALQAQEPAWITSRQIEASRRAMTRYIRRGGKIWIRIFPDKPVTMRPAETRMGSGKGNPEFWVAVVKPGRILFEIAGVTEEIAREAMRLAAYKLPIKTKFIVRSQVVEEQE.

It belongs to the universal ribosomal protein uL16 family. As to quaternary structure, part of the 50S ribosomal subunit.

Its function is as follows. Binds 23S rRNA and is also seen to make contacts with the A and possibly P site tRNAs. In Trichormus variabilis (strain ATCC 29413 / PCC 7937) (Anabaena variabilis), this protein is Large ribosomal subunit protein uL16.